Here is a 111-residue protein sequence, read N- to C-terminus: Large ribosomal subunit protein eL34B (111 aa).

Phosphotyrosine is present on Tyr-76.

The protein belongs to the eukaryotic ribosomal protein eL34 family. In terms of assembly, component of the large ribosomal subunit (LSU). Mature yeast ribosomes consist of a small (40S) and a large (60S) subunit. The 40S small subunit contains 1 molecule of ribosomal RNA (18S rRNA) and at least 33 different proteins. The large 60S subunit contains 3 rRNA molecules (25S, 5.8S and 5S rRNA) and at least 46 different proteins.

It is found in the cytoplasm. The protein resides in the nucleus. The protein localises to the nucleolus. Functionally, component of the ribosome, a large ribonucleoprotein complex responsible for the synthesis of proteins in the cell. The small ribosomal subunit (SSU) binds messenger RNAs (mRNAs) and translates the encoded message by selecting cognate aminoacyl-transfer RNA (tRNA) molecules. The large subunit (LSU) contains the ribosomal catalytic site termed the peptidyl transferase center (PTC), which catalyzes the formation of peptide bonds, thereby polymerizing the amino acids delivered by tRNAs into a polypeptide chain. The nascent polypeptides leave the ribosome through a tunnel in the LSU and interact with protein factors that function in enzymatic processing, targeting, and the membrane insertion of nascent chains at the exit of the ribosomal tunnel. This chain is Large ribosomal subunit protein eL34B (rpl3402), found in Schizosaccharomyces pombe (strain 972 / ATCC 24843) (Fission yeast).